We begin with the raw amino-acid sequence, 107 residues long: Large ribosomal subunit protein P1 (107 aa).

Residues 67–82 show a composition bias toward low complexity; sequence GPASAAPAGAAGAAAP. Positions 67-107 are disordered; that stretch reads GPASAAPAGAAGAAAPAEEKAEEKEEEKEESDEDMGFGLFD. Over residues 90 to 101 the composition is skewed to acidic residues; sequence KEEEKEESDEDM.

It belongs to the eukaryotic ribosomal protein P1/P2 family. In terms of assembly, P1 and P2 exist as dimers at the large ribosomal subunit.

Its subcellular location is the cytoplasm. Functionally, plays an important role in the elongation step of protein synthesis. The protein is Large ribosomal subunit protein P1 of Penicillium crustosum (Blue mold fungus).